A 142-amino-acid chain; its full sequence is Chorion class A protein Ld12 (142 aa).

A signal peptide spans 1–18 (MNSFALLLVCIQACLVQS).

It belongs to the chorion protein family.

Functionally, this protein is one of many from the eggshell of the gypsy moth. In Lymantria dispar (Gypsy moth), this protein is Chorion class A protein Ld12.